A 420-amino-acid chain; its full sequence is Protein translocase subunit SecF (420 aa).

Helical transmembrane passes span 7–27 (FSLLFLPCAILSVVLIGAGVL), 250–270 (LLVRQALLLVLGALVLIFLYV), 276–296 (WFFALGAIVALVHDACIMVSF), 309–327 (IAAILTIIGYSINDTVVVF), 358–378 (VVTTVTTLLAALMLYVFTEGG), and 388–408 (VGMVSGVYSTIYIAGGCIALI).

The protein belongs to the SecD/SecF family. SecF subfamily. In terms of assembly, forms a complex with SecD. Part of the essential Sec protein translocation apparatus which comprises SecA, SecYEG and auxiliary proteins SecDF. Other proteins may also be involved.

It is found in the cell inner membrane. Its function is as follows. Part of the Sec protein translocase complex. Interacts with the SecYEG preprotein conducting channel. SecDF uses the proton motive force (PMF) to complete protein translocation after the ATP-dependent function of SecA. The protein is Protein translocase subunit SecF of Treponema pallidum (strain Nichols).